The primary structure comprises 104 residues: Defensin-2 (104 aa).

An N-terminal signal peptide occupies residues 1–19 (MKFFVLFAILIAIVHASCA). Disulfide bonds link Cys64–Cys95, Cys81–Cys100, and Cys85–Cys102.

The protein belongs to the invertebrate defensin family. Type 1 subfamily. As to expression, low expression in head and thorax.

It localises to the secreted. Functionally, antibacterial peptide mostly active against Gram-positive bacteria. The protein is Defensin-2 of Apis mellifera (Honeybee).